A 79-amino-acid chain; its full sequence is uncharacterized protein (79 aa).

Residues 1 to 20 (MSQLMGIITRLQSLQETAEA) form the signal peptide.

This is an uncharacterized protein from Bacillus subtilis (strain 168).